The following is a 404-amino-acid chain: F-box protein At2g17036 (404 aa).

Residues 2-50 (MDWATLPKDLLDLISKCLESSFDLIQFRSVCSSWRSAAGPKRLLWAHNL) form the F-box domain.

This Arabidopsis thaliana (Mouse-ear cress) protein is F-box protein At2g17036.